A 139-amino-acid chain; its full sequence is MRTLWIVAVWLVGVEGNLYQFGKMIKNKTGKPAMFSYSAYGCYCGWGGQGKPQDPSDRCCFLHDCCYTRVNNCSPKMTLYSYRFENGDIICGDNDPCRKAVCECDREAAICLGENVNTYDEKYRFYSSSYCTEEESEKC.

The signal sequence occupies residues 1–16 (MRTLWIVAVWLVGVEG). 7 disulfides stabilise this stretch: C42–C131, C44–C60, C59–C111, C65–C139, C66–C104, C73–C97, and C91–C102. Ca(2+)-binding residues include Y43, G45, and G47. H63 is an active-site residue. A Ca(2+)-binding site is contributed by D64. D105 is an active-site residue.

This sequence belongs to the phospholipase A2 family. Group II subfamily. D49 sub-subfamily. Requires Ca(2+) as cofactor. Expressed by the venom gland.

It is found in the secreted. The catalysed reaction is a 1,2-diacyl-sn-glycero-3-phosphocholine + H2O = a 1-acyl-sn-glycero-3-phosphocholine + a fatty acid + H(+). Its function is as follows. PLA2 catalyzes the calcium-dependent hydrolysis of the 2-acyl groups in 3-sn-phosphoglycerides. The chain is Acidic phospholipase A2 4 from Echis carinatus sochureki (Saw-scaled viper).